The following is a 198-amino-acid chain: NAD(P)H dehydrogenase (quinone) (198 aa).

In terms of domain architecture, Flavodoxin-like spans 4-189 (VLVLYYSMYG…SIARYQGEYV (186 aa)). Residues 10–15 (SMYGHI) and 78–80 (TRF) contribute to the FMN site. An NAD(+)-binding site is contributed by Y12. W98 provides a ligand contact to substrate. FMN is bound by residues 113–118 (STGTGG) and H133.

Belongs to the WrbA family. It depends on FMN as a cofactor.

The enzyme catalyses a quinone + NADH + H(+) = a quinol + NAD(+). It carries out the reaction a quinone + NADPH + H(+) = a quinol + NADP(+). In Shigella dysenteriae serotype 1 (strain Sd197), this protein is NAD(P)H dehydrogenase (quinone).